The primary structure comprises 146 residues: NADH-quinone oxidoreductase subunit A (146 aa).

A run of 3 helical transmembrane segments spans residues Ile-4 to Leu-24, Leu-63 to Ile-83, and Ile-91 to Ile-111.

This sequence belongs to the complex I subunit 3 family. NDH-1 is composed of 13 different subunits. Subunits NuoA, H, J, K, L, M, N constitute the membrane sector of the complex.

The protein localises to the cell inner membrane. The catalysed reaction is a quinone + NADH + 5 H(+)(in) = a quinol + NAD(+) + 4 H(+)(out). Its function is as follows. NDH-1 shuttles electrons from NADH, via FMN and iron-sulfur (Fe-S) centers, to quinones in the respiratory chain. The immediate electron acceptor for the enzyme in this species is believed to be ubiquinone. Couples the redox reaction to proton translocation (for every two electrons transferred, four hydrogen ions are translocated across the cytoplasmic membrane), and thus conserves the redox energy in a proton gradient. The chain is NADH-quinone oxidoreductase subunit A from Blochmanniella pennsylvanica (strain BPEN).